Reading from the N-terminus, the 71-residue chain is Movement protein TGBp3 (71 aa).

Over 1-4 the chain is Lumenal; sequence MWSD. A helical transmembrane segment spans residues 5–27; it reads SLVSRICVPIIVVCTSIALLNVV. The Cytoplasmic portion of the chain corresponds to 28-71; it reads SFRSECSCVVHISGAAIDIRGCSFTPDFIEYAKTLRVFNHRYQE.

The protein belongs to the Tymovirales TGBp3 protein family.

It localises to the host endoplasmic reticulum membrane. Its function is as follows. Plays a role in viral cell-to-cell propagation, by facilitating genome transport to neighboring plant cells through plasmosdesmata. May induce the formation of granular vesicles derived from the Endoplasmic reticulum, which align on actin filaments. The sequence is that of Movement protein TGBp3 from Populus balsamifera (Balsam poplar).